A 503-amino-acid chain; its full sequence is Maturase K (503 aa).

It belongs to the intron maturase 2 family. MatK subfamily.

The protein resides in the plastid. The protein localises to the chloroplast. Functionally, usually encoded in the trnK tRNA gene intron. Probably assists in splicing its own and other chloroplast group II introns. The sequence is that of Maturase K from Caragana arborescens (Siberian pea tree).